Here is a 146-residue protein sequence, read N- to C-terminus: uncharacterized protein (146 aa).

The helical transmembrane segment at 7 to 27 (FVLSITIVLVILIIIAFIWYN) threads the bilayer.

This sequence belongs to the asfivirus E146L family.

It is found in the host membrane. The protein resides in the virion. This is an uncharacterized protein from Ornithodoros (relapsing fever ticks).